Consider the following 76-residue polypeptide: Vasotab-TY3 (76 aa).

The signal sequence occupies residues M1 to D21. The Kazal-like domain maps to D22 to K76. 3 disulfide bridges follow: C23–C60, C27–C53, and C35–C75.

Expressed by the salivary gland.

Its subcellular location is the secreted. Functionally, vasodilator protein that inhibits vasoconstriction of isolated rat femoral artery induced by phenylephrine. Since platelet aggregation and vasoconstriction are key hemostatic responses, particularly in small wounds, this protein likely participates in the antihemostatic responses during blood feeding. Blocks L-type calcium channels (Cav1/CACNA1) in left ventricular myocytes isolated from rat hearts. In Tabanus yao (Horsefly), this protein is Vasotab-TY3.